Consider the following 622-residue polypeptide: Threonine--tRNA ligase (622 aa).

Positions 1–134 are editing domain; sequence MKTLLIHSDY…GHPLSELSRK (134 aa). Residues 199-498 form a catalytic region; it reads PHVKYIKEKE…TLEDKPPALP (300 aa). Residues Cys291, His343, and His467 each contribute to the Zn(2+) site.

This sequence belongs to the class-II aminoacyl-tRNA synthetase family. As to quaternary structure, homodimer. The cofactor is Zn(2+).

Its subcellular location is the cytoplasm. The enzyme catalyses tRNA(Thr) + L-threonine + ATP = L-threonyl-tRNA(Thr) + AMP + diphosphate + H(+). Functionally, catalyzes the attachment of threonine to tRNA(Thr) in a two-step reaction: L-threonine is first activated by ATP to form Thr-AMP and then transferred to the acceptor end of tRNA(Thr). Also edits incorrectly charged L-seryl-tRNA(Thr). In Methanococcus vannielii (strain ATCC 35089 / DSM 1224 / JCM 13029 / OCM 148 / SB), this protein is Threonine--tRNA ligase.